Reading from the N-terminus, the 210-residue chain is Redox-sensing transcriptional repressor Rex (210 aa).

A DNA-binding region (H-T-H motif) is located at residues 17–56 (KYHRYLYELLKNDVDRISSKELSEKIGFTASQIRQDLNCF). An NAD(+)-binding site is contributed by 91-96 (GAGNIG).

It belongs to the transcriptional regulatory Rex family. As to quaternary structure, homodimer.

The protein localises to the cytoplasm. Its function is as follows. Modulates transcription in response to changes in cellular NADH/NAD(+) redox state. In Clostridium botulinum (strain ATCC 19397 / Type A), this protein is Redox-sensing transcriptional repressor Rex.